The chain runs to 218 residues: Adenylate kinase (218 aa).

10–15 (GAGKGT) is an ATP binding site. The interval 30-59 (STGDMLRAAVKAGTPLGLEAKKVMDAGGLV) is NMP. AMP contacts are provided by residues Thr-31, Arg-36, 57–59 (GLV), 85–88 (GFPR), and Gln-92. The segment at 122–159 (ERRVHPASGRSYHVRFNPPKAEGVDDVTGEPLVQRDDD) is LID. ATP is bound by residues Arg-123 and 132–133 (SY). Positions 156 and 167 each coordinate AMP. Gly-203 provides a ligand contact to ATP.

Belongs to the adenylate kinase family. Monomer.

It localises to the cytoplasm. The catalysed reaction is AMP + ATP = 2 ADP. It participates in purine metabolism; AMP biosynthesis via salvage pathway; AMP from ADP: step 1/1. Catalyzes the reversible transfer of the terminal phosphate group between ATP and AMP. Plays an important role in cellular energy homeostasis and in adenine nucleotide metabolism. In Bordetella pertussis (strain Tohama I / ATCC BAA-589 / NCTC 13251), this protein is Adenylate kinase.